Consider the following 960-residue polypeptide: Glycine dehydrogenase (decarboxylating) (960 aa).

At K709 the chain carries N6-(pyridoxal phosphate)lysine.

The protein belongs to the GcvP family. The glycine cleavage system is composed of four proteins: P, T, L and H. Pyridoxal 5'-phosphate is required as a cofactor.

It catalyses the reaction N(6)-[(R)-lipoyl]-L-lysyl-[glycine-cleavage complex H protein] + glycine + H(+) = N(6)-[(R)-S(8)-aminomethyldihydrolipoyl]-L-lysyl-[glycine-cleavage complex H protein] + CO2. Its function is as follows. The glycine cleavage system catalyzes the degradation of glycine. The P protein binds the alpha-amino group of glycine through its pyridoxal phosphate cofactor; CO(2) is released and the remaining methylamine moiety is then transferred to the lipoamide cofactor of the H protein. The chain is Glycine dehydrogenase (decarboxylating) from Edwardsiella ictaluri (strain 93-146).